Reading from the N-terminus, the 156-residue chain is Transcription elongation factor GreA (156 aa).

Residues Ala-46–Ala-67 are a coiled coil.

It belongs to the GreA/GreB family.

Functionally, necessary for efficient RNA polymerase transcription elongation past template-encoded arresting sites. The arresting sites in DNA have the property of trapping a certain fraction of elongating RNA polymerases that pass through, resulting in locked ternary complexes. Cleavage of the nascent transcript by cleavage factors such as GreA or GreB allows the resumption of elongation from the new 3'terminus. GreA releases sequences of 2 to 3 nucleotides. This is Transcription elongation factor GreA from Cereibacter sphaeroides (strain ATCC 17029 / ATH 2.4.9) (Rhodobacter sphaeroides).